A 509-amino-acid polypeptide reads, in one-letter code: Dihydrolipoyl dehydrogenase, mitochondrial (509 aa).

The N-terminal 35 residues, 1–35, are a transit peptide targeting the mitochondrion; sequence MQSWSRVYCTLAKRGHFNRIAHGLQGVSAVPLRTY. Lysine 66 carries the N6-acetyllysine; alternate modification. Lysine 66 is subject to N6-succinyllysine; alternate. Residues 71–80 and lysine 89 each bind FAD; that span reads EKNETLGGTC. A disulfide bridge links cysteine 80 with cysteine 85. An N6-acetyllysine; alternate mark is found at lysine 104, lysine 122, lysine 132, and lysine 143. 4 positions are modified to N6-succinyllysine; alternate: lysine 104, lysine 122, lysine 132, and lysine 143. Glycine 154 serves as a coordination point for FAD. N6-succinyllysine occurs at positions 159 and 166. 183-185 is a binding site for FAD; it reads TGS. NAD(+) is bound by residues 220–227 and glutamate 243; that span reads GAGVIGVE. N6-succinyllysine occurs at positions 273 and 277. Valine 278 is a binding site for NAD(+). 2 positions are modified to phosphoserine: serine 285 and serine 297. Residue glycine 314 coordinates NAD(+). N6-acetyllysine is present on lysine 346. FAD contacts are provided by residues aspartate 355 and 361-364; that span reads MLAH. An N6-acetyllysine; alternate modification is found at lysine 410. At lysine 410 the chain carries N6-succinyllysine; alternate. N6-acetyllysine occurs at positions 417 and 420. An N6-succinyllysine modification is found at lysine 430. The active-site Proton acceptor is histidine 487. Position 502 is a phosphoserine (serine 502). N6-acetyllysine; alternate is present on lysine 505. The residue at position 505 (lysine 505) is an N6-succinyllysine; alternate.

It belongs to the class-I pyridine nucleotide-disulfide oxidoreductase family. In terms of assembly, homodimer. Part of the multimeric pyruvate dehydrogenase complex that contains multiple copies of pyruvate dehydrogenase (subunits PDHA (PDHA1 or PDHA2) and PDHB, E1), dihydrolipoamide acetyltransferase (DLAT, E2) and lipoamide dehydrogenase (DLD, E3). These subunits are bound to an inner core composed of about 48 DLAT and 12 PDHX molecules (by non covalent bonds). The 2-oxoglutarate dehydrogenase complex is composed of OGDH (2-oxoglutarate dehydrogenase; E1), DLST (dihydrolipoamide succinyltransferase; E2), DLD (dihydrolipoamide dehydrogenase; E3) and the assembly factor KGD4. It contains multiple copies of the three enzymatic components (E1, E2 and E3). In the nucleus, the 2-oxoglutarate dehydrogenase complex associates with KAT2A. Interacts with PDHX. FAD serves as cofactor. Tyrosine phosphorylated. As to expression, expressed in heart (at protein level).

The protein localises to the mitochondrion matrix. The protein resides in the nucleus. It localises to the cell projection. It is found in the cilium. Its subcellular location is the flagellum. The protein localises to the cytoplasmic vesicle. The protein resides in the secretory vesicle. It localises to the acrosome. It catalyses the reaction N(6)-[(R)-dihydrolipoyl]-L-lysyl-[protein] + NAD(+) = N(6)-[(R)-lipoyl]-L-lysyl-[protein] + NADH + H(+). Lipoamide dehydrogenase is a component of the glycine cleavage system as well as an E3 component of three alpha-ketoacid dehydrogenase complexes (pyruvate-, alpha-ketoglutarate-, and branched-chain amino acid-dehydrogenase complex). The 2-oxoglutarate dehydrogenase complex is mainly active in the mitochondrion. A fraction of the 2-oxoglutarate dehydrogenase complex also localizes in the nucleus and is required for lysine succinylation of histones: associates with KAT2A on chromatin and provides succinyl-CoA to histone succinyltransferase KAT2A. In monomeric form may have additional moonlighting function as serine protease. Involved in the hyperactivation of spermatazoa during capacitation and in the spermatazoal acrosome reaction. The chain is Dihydrolipoyl dehydrogenase, mitochondrial (DLD) from Sus scrofa (Pig).